The sequence spans 432 residues: MPVLNLKSDLADADDLETLMAGIGRRARAAGRAMALAPAQTKDLGLRAIAEQIRTSAPAILRENARDVSAAQAAGLTNAIIDRLTLDEGRVAAIAEAVEKVAGLADPVGRQLAAFERPNGLLIERISVPLGVVGVIFESRPNVTADAGALCLKAGNAAILRAGSDSHRTATAIAAAMSEGLARAGLPADAIQLVPTRDRAAVGLMLTGLGGCVDVIVPRGGRSLVERVQAEAKVPVFAHLDGICHVYVAEGADLGMARSLLLNSKMRRTGICGAAETLLVDAAVAETHLKPLVEALLESGCAVRGDAATQAADPRVSAATDADWRTEYLDAIISAKVVDGLDAAIAHIEANGSHHTDAIITDDTNAAARFLNEVDSAIVTHNASTQFADGGEFGFGAEIGIATGRMHARGPVGVEQLTTFKYRVHGSGQTRP.

It belongs to the gamma-glutamyl phosphate reductase family.

Its subcellular location is the cytoplasm. It catalyses the reaction L-glutamate 5-semialdehyde + phosphate + NADP(+) = L-glutamyl 5-phosphate + NADPH + H(+). Its pathway is amino-acid biosynthesis; L-proline biosynthesis; L-glutamate 5-semialdehyde from L-glutamate: step 2/2. Catalyzes the NADPH-dependent reduction of L-glutamate 5-phosphate into L-glutamate 5-semialdehyde and phosphate. The product spontaneously undergoes cyclization to form 1-pyrroline-5-carboxylate. The chain is Gamma-glutamyl phosphate reductase from Methylorubrum extorquens (strain CM4 / NCIMB 13688) (Methylobacterium extorquens).